A 389-amino-acid polypeptide reads, in one-letter code: Stilbene synthase 3 (389 aa).

55 to 58 (KFQR) contacts substrate. Cys-164 is a catalytic residue. Substrate-binding positions include Leu-267 and 305 to 307 (GGR).

This sequence belongs to the thiolase-like superfamily. Chalcone/stilbene synthases family. Homodimer.

It is found in the cytoplasm. The enzyme catalyses 4-coumaroyl-CoA + 3 malonyl-CoA + 3 H(+) = trans-resveratrol + 4 CO2 + 4 CoA. The protein operates within phytoalexin biosynthesis; 3,4',5-trihydroxystilbene biosynthesis; 3,4',5-trihydroxystilbene from trans-4-coumarate: step 2/2. In Arachis hypogaea (Peanut), this protein is Stilbene synthase 3.